The primary structure comprises 1405 residues: DNA-directed RNA polymerase subunit beta' (1405 aa).

The Zn(2+) site is built by Cys-70, Cys-72, Cys-85, and Cys-88. Mg(2+) is bound by residues Asp-460, Asp-462, and Asp-464. Zn(2+) is bound by residues Cys-814, Cys-888, Cys-895, and Cys-898.

Belongs to the RNA polymerase beta' chain family. In terms of assembly, the RNAP catalytic core consists of 2 alpha, 1 beta, 1 beta' and 1 omega subunit. When a sigma factor is associated with the core the holoenzyme is formed, which can initiate transcription. Requires Mg(2+) as cofactor. The cofactor is Zn(2+).

It catalyses the reaction RNA(n) + a ribonucleoside 5'-triphosphate = RNA(n+1) + diphosphate. Functionally, DNA-dependent RNA polymerase catalyzes the transcription of DNA into RNA using the four ribonucleoside triphosphates as substrates. The chain is DNA-directed RNA polymerase subunit beta' from Shewanella putrefaciens (strain CN-32 / ATCC BAA-453).